Reading from the N-terminus, the 506-residue chain is Glutamate--tRNA ligase (506 aa).

The 'HIGH' region motif lies at 24–34 (PSPTGLQHIGG). Residues Cys121, Cys123, Cys148, and His150 each coordinate Zn(2+). The 'KMSKS' region signature appears at 266–270 (KLSKR). Lys269 is a binding site for ATP.

It belongs to the class-I aminoacyl-tRNA synthetase family. Glutamate--tRNA ligase type 1 subfamily. Monomer. Requires Zn(2+) as cofactor.

Its subcellular location is the cytoplasm. It catalyses the reaction tRNA(Glu) + L-glutamate + ATP = L-glutamyl-tRNA(Glu) + AMP + diphosphate. Catalyzes the attachment of glutamate to tRNA(Glu) in a two-step reaction: glutamate is first activated by ATP to form Glu-AMP and then transferred to the acceptor end of tRNA(Glu). In Borrelia duttonii (strain Ly), this protein is Glutamate--tRNA ligase.